A 519-amino-acid chain; its full sequence is LysM domain-containing protein ARB_03442 (519 aa).

The signal sequence occupies residues 1–19; it reads MGQLKQLAGILALASPAIA. The N-linked (GlcNAc...) asparagine glycan is linked to asparagine 47. Residues 312–358 enclose the LysM domain; sequence KYYNVVAGDTCASISSEFEVTMDELLTYNPELHPNCENLWANFAICV. The tract at residues 314–358 is lysM domain; the sequence is YNVVAGDTCASISSEFEVTMDELLTYNPELHPNCENLWANFAICV. Low complexity predominate over residues 407–416; sequence PDAPDAQGQT. A disordered region spans residues 407 to 458; that stretch reads PDAPDAQGQTVHDDEPPEEPHIEEPPKDIPAGDDDDRKKAKLPLPSGKYPLP. A compositionally biased stretch (basic and acidic residues) spans 417–433; that stretch reads VHDDEPPEEPHIEEPPK. The N-linked (GlcNAc...) asparagine glycan is linked to asparagine 460. The 44-residue stretch at 467 to 510 folds into the Chitin-binding type-1 domain; the sequence is DGSCNEYISCVGSPFGVCCSTSGWCGYGKPWCGVGNCVSGYCDT. 4 disulfides stabilise this stretch: cysteine 470–cysteine 485, cysteine 476–cysteine 491, cysteine 484–cysteine 498, and cysteine 503–cysteine 508.

It is found in the secreted. Functionally, might have a role in sequestration of chitin oligosaccharides (breakdown products of fungal cell walls that are released during invasion and act as triggers of host immunity) to dampen host defense. The protein is LysM domain-containing protein ARB_03442 of Arthroderma benhamiae (strain ATCC MYA-4681 / CBS 112371) (Trichophyton mentagrophytes).